The primary structure comprises 219 residues: Phosphatidylserine decarboxylase proenzyme (219 aa).

Catalysis depends on Ser188, which acts as the Schiff-base intermediate with substrate; via pyruvic acid. A Pyruvic acid (Ser); by autocatalysis modification is found at Ser188.

This sequence belongs to the phosphatidylserine decarboxylase family. PSD-A subfamily. In terms of assembly, heterodimer of a large membrane-associated beta subunit and a small pyruvoyl-containing alpha subunit. Requires pyruvate as cofactor. Is synthesized initially as an inactive proenzyme. Formation of the active enzyme involves a self-maturation process in which the active site pyruvoyl group is generated from an internal serine residue via an autocatalytic post-translational modification. Two non-identical subunits are generated from the proenzyme in this reaction, and the pyruvate is formed at the N-terminus of the alpha chain, which is derived from the carboxyl end of the proenzyme. The post-translation cleavage follows an unusual pathway, termed non-hydrolytic serinolysis, in which the side chain hydroxyl group of the serine supplies its oxygen atom to form the C-terminus of the beta chain, while the remainder of the serine residue undergoes an oxidative deamination to produce ammonia and the pyruvoyl prosthetic group on the alpha chain.

It is found in the cell membrane. The enzyme catalyses a 1,2-diacyl-sn-glycero-3-phospho-L-serine + H(+) = a 1,2-diacyl-sn-glycero-3-phosphoethanolamine + CO2. It participates in phospholipid metabolism; phosphatidylethanolamine biosynthesis; phosphatidylethanolamine from CDP-diacylglycerol: step 2/2. Catalyzes the formation of phosphatidylethanolamine (PtdEtn) from phosphatidylserine (PtdSer). In Ruegeria pomeroyi (strain ATCC 700808 / DSM 15171 / DSS-3) (Silicibacter pomeroyi), this protein is Phosphatidylserine decarboxylase proenzyme.